The primary structure comprises 426 residues: Potassium channel subfamily K member 2 (426 aa).

At 1–61 the chain is on the cytoplasmic side; that stretch reads MLASASRERP…SAINVMKWKT (61 aa). Important for GNG4 binding and L-glutamate release in astrocytes regions lie at residues 17 to 38 and 51 to 61; these read AAPD…LSFS and DSAINVMKWKT. A helical membrane pass occupies residues 62–82; the sequence is VSTIFLVVVLYLIIGATVFKA. Asparagine 110 and asparagine 134 each carry an N-linked (GlcNAc...) asparagine glycan. The segment at residues 144-170 is an intramembrane region (pore-forming); that stretch reads LGSSFFFAGTVITTIGFGNISPRTEGG. K(+)-binding residues include threonine 157, isoleucine 158, glycine 159, and phenylalanine 160. A selectivity filter 1 region spans residues 157-162; it reads TIGFGN. A helical transmembrane segment spans residues 172–192; it reads IFCIIYALLGIPLFGFLLAGV. The Cytoplasmic portion of the chain corresponds to 193 to 222; that stretch reads GDQLGTIFGKGIAKVEDTFIKWNVSQTKIR. Residues 223 to 243 form a helical membrane-spanning segment; it reads IISTIIFILFGCVLFVALPAV. Residues 253 to 283 constitute an intramembrane region (pore-forming); sequence ALDAIYFVVITLTTIGFGDYVAGGSDIEYLD. K(+)-binding residues include threonine 266, isoleucine 267, glycine 268, and phenylalanine 269. Positions 266–271 are selectivity filter 2; that stretch reads TIGFGD. The chain crosses the membrane as a helical span at residues 288-308; that stretch reads VVWFWILVGLAYFAAVLSMIG. Over 309 to 426 the chain is Cytoplasmic; sequence DWLRVISKKT…EDIAVIENMK (118 aa). Residues 313–326 are interaction with AKAP5; sequence VISKKTKEEVGEFR. Residues 337-385 form an essential for chloroform and halothane sensitivity region; that stretch reads TAEFKETRRRLSVEIYDKFQRATSVKRKLSAELAGNHNQELTPCRRTLS. Position 348 is a phosphoserine; by PKA (serine 348).

Belongs to the two pore domain potassium channel (TC 1.A.1.8) family. In terms of assembly, homodimer; disulfide-linked. Forms heterodimers with other 2-pore domain K(+) channel subunits, such as KCNK1, KCNK4, KCNK10 and KCNK18. Interacts with AKAP5; the channel is recruited to postsynaptic microdomains by AKAP5 where it can integrate neurotransmitter receptor signals. Part of a complex composed of AKAP5 and ADRB2. Upon AKAP5 binding, the channel is no longer sensitive to intracellular acidification, membrane stretch or arachidonic acid stimuli. Interacts with POPDC1; the interaction enhances KCNK2 surface expression and is inhibited by cAMP. Interacts (via N-terminus) with G-protein subunit GNG4 (via C-terminus); this interaction confers ion selectivity to L-glutamate and Cl(-) anions. Phosphorylation at Ser-348 controls the reversible conversion from a leak channel to a voltage-dependent channel. As to expression, expressed in cardiomyocytes (at protein level). Expressed in various brain regions including the lateral olfactory tract, piriform cortex of the forebrain, paraventricular and anteromedial thalamic nuclei, brainstem, caudate putamen, nucleus accumbens, neocortex and interpeduncular nucleus. Detected in astrocytes in hippocampus stratum radiatum. Expressed in brain and kidney.

The protein resides in the cell membrane. Its subcellular location is the endoplasmic reticulum membrane. It localises to the cell projection. It is found in the axon. The protein localises to the dendrite. The protein resides in the postsynaptic density membrane. Its subcellular location is the sarcolemma. The enzyme catalyses K(+)(in) = K(+)(out). It carries out the reaction L-glutamate(out) = L-glutamate(in). It catalyses the reaction chloride(in) = chloride(out). The catalysed reaction is Rb(+)(in) = Rb(+)(out). The enzyme catalyses Cs(+)(in) = Cs(+)(out). Its activity is regulated as follows. Activated by various stimuli including intracellular acidic pH, mechanical stretch and polyunsaturated fatty acids such as arachidonic acid. Its function is as follows. K(+) channel that conducts voltage-dependent outward rectifying currents upon membrane depolarization. Voltage sensing is coupled to K(+) electrochemical gradient in an 'ion flux gating' mode where outward but not inward ion flow opens the gate. Converts to voltage-independent 'leak' conductance mode upon stimulation by various stimuli including mechanical membrane stretch, acidic pH, heat and lipids. Reversibly converts between a voltage-insensitive K(+) 'leak' channel and a voltage-dependent outward rectifying K(+) channel in a phosphorylation-dependent manner. Homo- and heterodimerizes to form functional channels with distinct regulatory and gating properties. In trigeminal ganglia sensory neurons, the heterodimer of KCNK2/TREK-1 and KCNK18/TRESK inhibits neuronal firing and neurogenic inflammation by stabilizing the resting membrane potential at K(+) equilibrium potential as well as by regulating the threshold of action potentials and the spike frequency. At trigeminal A-beta afferent nerves, the heterodimer of KCNK2/TREK-1 and KCNK4/TRAAK is mostly coexpressed at nodes of Ranvier where it conducts voltage-independent mechanosensitive and thermosensitive currents, allowing rapid action potential repolarization, high speed and high frequence saltatory conduction on myelinated nerves to ensure prompt sensory responses. In hippocampal astrocytes, the heterodimer of KCNK2/TREK-1 and KCNK1/TWIK-1 allows passive K(+) conductance under basal conditions, but changes ion selectivity and becomes permeable to L-glutamate and Cl(-) ions upon binding to G-protein subunit GNG4 in stimulated astrocytes. Mediates rapid L-glutamate release in response to activation of G-protein-coupled receptors such as F2R and CNR1. In hippocampal pyramidal neurons, the homodimer of KCNK2/TREK-1 contributes to gamma-aminobutyric acid (GABA) B-induced slow inhibitory postsynaptic potential. Associates with AKAP5 and Gs-protein-coupled receptor B2AR at postsynaptic dense bodies and converts to a leak channel no longer sensitive to stimulation by arachidonic acid, acidic pH or mechanical stress, nor inhibited by Gq-coupled receptors but still under the negative control of Gs-coupled receptors. Permeable to other monovalent cations such as Rb(+) and Cs(+). Functionally, does not display channel activity but reduces the channel activity of isoform 1, isoform 2 and isoform 4 and reduces cell surface expression of isoform 2. The protein is Potassium channel subfamily K member 2 of Rattus norvegicus (Rat).